The primary structure comprises 460 residues: Elongation factor 1-alpha (460 aa).

Gly2 is subject to N,N,N-trimethylglycine. N6,N6-dimethyllysine; alternate is present on Lys3. Lys3 is subject to N6-methyllysine; alternate. The tr-type G domain maps to 6–241; sequence KTHINLVVIG…DAIDPPTRPT (236 aa). The interval 15–22 is G1; that stretch reads GHVDSGKS. Position 15-22 (15-22) interacts with GTP; that stretch reads GHVDSGKS. An N6-methyllysine modification is found at Lys31. A G2 region spans residues 71-75; the sequence is GITID. An N6,N6,N6-trimethyllysine modification is found at Lys80. Residues 92–95 are G3; the sequence is DAPG. GTP is bound by residues 92-96 and 154-157; these read DAPGH and NKMD. The G4 stretch occupies residues 154-157; that stretch reads NKMD. A G5 region spans residues 193–195; that stretch reads SGF. Lys317 is modified (N6,N6-dimethyllysine; alternate). Lys317 is modified (N6-methyllysine; alternate). Lys391 is modified (N6-methyllysine).

The protein belongs to the TRAFAC class translation factor GTPase superfamily. Classic translation factor GTPase family. EF-Tu/EF-1A subfamily.

The protein resides in the cytoplasm. Functionally, this protein promotes the GTP-dependent binding of aminoacyl-tRNA to the A-site of ribosomes during protein biosynthesis. The protein is Elongation factor 1-alpha (TEF) of Coccidioides immitis (strain RS) (Valley fever fungus).